A 113-amino-acid chain; its full sequence is Ribonuclease P protein component (113 aa).

The span at 1–10 (MLPTRHRMRT) shows a compositional bias: basic residues. The interval 1–23 (MLPTRHRMRTSAHFSTTVRSGAR) is disordered.

This sequence belongs to the RnpA family. Consists of a catalytic RNA component (M1 or rnpB) and a protein subunit.

The catalysed reaction is Endonucleolytic cleavage of RNA, removing 5'-extranucleotides from tRNA precursor.. Its function is as follows. RNaseP catalyzes the removal of the 5'-leader sequence from pre-tRNA to produce the mature 5'-terminus. It can also cleave other RNA substrates such as 4.5S RNA. The protein component plays an auxiliary but essential role in vivo by binding to the 5'-leader sequence and broadening the substrate specificity of the ribozyme. This is Ribonuclease P protein component from Kocuria rhizophila (strain ATCC 9341 / DSM 348 / NBRC 103217 / DC2201).